A 79-amino-acid polypeptide reads, in one-letter code: Serine protease inhibitor Kazal-type 1 (79 aa).

Positions 1–18 (MKVAIIFLLSALALLSLA) are cleaved as a signal peptide. The 54-residue stretch at 26–79 (NGKTPNCPKQIMGCPRIYDPVCGTNGITYPSECSLCFENRKFGTSIHIQRRGTC) folds into the Kazal-like domain. Cystine bridges form between C32/C61, C39/C58, and C47/C79.

The protein localises to the secreted. Serine protease inhibitor which exhibits anti-trypsin activity. In the pancreas, protects against trypsin-catalyzed premature activation of zymogens. Functionally, in the male reproductive tract, binds to sperm heads where it modulates sperm capacitance by inhibiting calcium uptake and nitrogen oxide (NO) production. The polypeptide is Serine protease inhibitor Kazal-type 1 (Rattus norvegicus (Rat)).